The primary structure comprises 116 residues: Iron-sulfur cluster insertion protein ErpA (116 aa).

Iron-sulfur cluster is bound by residues cysteine 44, cysteine 108, and cysteine 110.

Belongs to the HesB/IscA family. In terms of assembly, homodimer. Iron-sulfur cluster serves as cofactor.

Required for insertion of 4Fe-4S clusters for at least IspG. This chain is Iron-sulfur cluster insertion protein ErpA, found in Shewanella baltica (strain OS223).